Here is a 667-residue protein sequence, read N- to C-terminus: Heat shock protein DDB_G0283913 (667 aa).

A run of 2 helical transmembrane segments spans residues 2-22 (FVGTLVIIICTTLIIIIKKIL) and 224-244 (MFICDMSFSLASIIVYVLNEL). The stretch at 18–82 (IKKILKRKKE…ELAKKLNCYI (65 aa)) forms a coiled coil. Residues 432–478 (IDDTIQDNDKSGSEVSTPTISSSSSSPLQPIIKDEKDDNIENKSDEA) are disordered. The span at 444 to 457 (SEVSTPTISSSSSS) shows a compositional bias: low complexity. Over residues 463 to 477 (IKDEKDDNIENKSDE) the composition is skewed to basic and acidic residues. The sHSP domain maps to 551 to 667 (MVFSSGFKPF…VITFKFEKIG (117 aa)).

Belongs to the small heat shock protein (HSP20) family.

It is found in the membrane. The polypeptide is Heat shock protein DDB_G0283913 (Dictyostelium discoideum (Social amoeba)).